Reading from the N-terminus, the 325-residue chain is Beta-ketoacyl-[acyl-carrier-protein] synthase III (325 aa).

Catalysis depends on residues cysteine 119 and histidine 252. Positions 253-257 (QANIR) are ACP-binding. Residue asparagine 282 is part of the active site.

It belongs to the thiolase-like superfamily. FabH family. In terms of assembly, homodimer.

It is found in the cytoplasm. It catalyses the reaction malonyl-[ACP] + acetyl-CoA + H(+) = 3-oxobutanoyl-[ACP] + CO2 + CoA. It participates in lipid metabolism; fatty acid biosynthesis. In terms of biological role, catalyzes the condensation reaction of fatty acid synthesis by the addition to an acyl acceptor of two carbons from malonyl-ACP. Catalyzes the first condensation reaction which initiates fatty acid synthesis and may therefore play a role in governing the total rate of fatty acid production. Possesses both acetoacetyl-ACP synthase and acetyl transacylase activities. Its substrate specificity determines the biosynthesis of branched-chain and/or straight-chain of fatty acids. This chain is Beta-ketoacyl-[acyl-carrier-protein] synthase III, found in Paracidovorax citrulli (strain AAC00-1) (Acidovorax citrulli).